A 66-amino-acid chain; its full sequence is U-scoloptoxin(24)-Er2a (66 aa).

Residues 1–23 (MVKPLHCLIGIVLFLAVLNAGNG) form the signal peptide. Residues 43 to 66 (SLFHGNQRKKRSEEKRFSDMEQTK) are disordered. Over residues 53-66 (RSEEKRFSDMEQTK) the composition is skewed to basic and acidic residues.

Belongs to the scoloptoxin-24 family. As to expression, expressed by the venom gland.

The protein resides in the secreted. In Ethmostigmus rubripes (Giant centipede), this protein is U-scoloptoxin(24)-Er2a.